Reading from the N-terminus, the 359-residue chain is Alanine racemase, biosynthetic (359 aa).

K34 (proton acceptor; specific for D-alanine) is an active-site residue. An N6-(pyridoxal phosphate)lysine modification is found at K34. Residue R129 coordinates substrate. Y255 serves as the catalytic Proton acceptor; specific for L-alanine. M303 provides a ligand contact to substrate.

It belongs to the alanine racemase family. Requires pyridoxal 5'-phosphate as cofactor.

The catalysed reaction is L-alanine = D-alanine. Its pathway is amino-acid biosynthesis; D-alanine biosynthesis; D-alanine from L-alanine: step 1/1. It participates in cell wall biogenesis; peptidoglycan biosynthesis. Catalyzes the interconversion of L-alanine and D-alanine. Provides the D-alanine required for cell wall biosynthesis. The polypeptide is Alanine racemase, biosynthetic (alr) (Escherichia coli O6:H1 (strain CFT073 / ATCC 700928 / UPEC)).